A 412-amino-acid chain; its full sequence is Alpha-1-antitrypsin 1-3 (412 aa).

A signal peptide spans 1-24 (MTPSISWGLLLLAGLCCLVPSFLA). 3 N-linked (GlcNAc...) asparagine glycosylation sites follow: Asn-64, Asn-101, and Asn-265. Residues 368-387 (AVTVLLAVPYSMPPILRFDH) form an RCL region.

This sequence belongs to the serpin family.

The protein localises to the secreted. In terms of biological role, inhibitor of serine proteases. Can inhibit trypsin and chymotrypsin; relatively ineffective against elastase. The sequence is that of Alpha-1-antitrypsin 1-3 (Serpina1c) from Mus musculus (Mouse).